We begin with the raw amino-acid sequence, 165 residues long: Ixolaris (165 aa).

The first 26 residues, 1 to 26 (MRAVSCFLYYGVAWIALGSWGASSSA), serve as a signal peptide directing secretion. BPTI/Kunitz inhibitor domains are found at residues 43–93 (CLDP…NESC) and 101–151 (CSLE…KETC). Disulfide bonds link Cys-43–Cys-93, Cys-51–Cys-76, Cys-68–Cys-89, Cys-101–Cys-151, and Cys-126–Cys-147. N-linked (GlcNAc...) asparagine glycans are attached at residues Asn-90 and Asn-123. An N-linked (GlcNAc...) asparagine glycan is attached at Asn-161.

Monomer. Interacts with host coagulation factor X/F10 (inactive and activated). As to expression, saliva (at protein level). Salivary gland.

Its subcellular location is the secreted. Anticoagulant protein that modulates blood feeding of ticks on vertebrate species. Inhibits activation of host blood coagulation factor X (F10). Inhibits activity of host coagulation factor VIIa-tissue factor (F7-F3) complex in a factor X/Xa-dependent manner. Prevents interaction between host coagulation factor X and activated factor VIIIa (F8). In Ixodes scapularis (Black-legged tick), this protein is Ixolaris.